We begin with the raw amino-acid sequence, 68 residues long: Conotoxin mr3g (68 aa).

A signal peptide spans 1–19 (MSKLGVLLTICLLLFALTA). Positions 20 to 51 (VPLDGDQPADRPAERMQDDISSERHPMFDAVR) are excised as a propeptide. Intrachain disulfides connect Cys-53/Cys-67, Cys-54/Cys-63, and Cys-59/Cys-66. 4-hydroxyproline occurs at positions 55 and 65. Cys-67 carries the post-translational modification Cysteine amide.

As to expression, expressed by the venom duct.

The protein localises to the secreted. In terms of biological role, intracranially injection into mice does not elicit symptoms. The protein is Conotoxin mr3g of Conus marmoreus (Marble cone).